A 359-amino-acid chain; its full sequence is MQTIEVNGASPYEVTIGHNLFKDVAKSMSQLGANQAAIITQPVMGETAKKLVGAIEALGKEATIITVPDAEDGKNLNVAGDCWDVLGRKAFGRKDVIISLGGGAVTDLAGFVAACWMRGIAVIHVPTTLLSMVDAAVGGKTGINTSAGKNLVGAFHEPSGVFIDLDMIATLPDREKISGSAEIIKTGFIADTKILSLYEEDPEACFNVEGYLPELIARSVAVKARVVASDLREAGQREILNYGHTFGHAVELKEKYEWRHGNAVSVGMMFVAALARNRGLITDELYLRHKNILSSVGLPTTYPEGHFAELYQAMLRDKKNRDGRIRFVALIGAGKTIRIEDADRAELIAAYETLNKGGV.

Residues 69–74 (DAEDGK), 103–107 (GAVTD), 127–128 (TT), K140, and K149 each bind NAD(+). Zn(2+) is bound by residues E182, H244, and H260.

The protein belongs to the sugar phosphate cyclases superfamily. Dehydroquinate synthase family. NAD(+) serves as cofactor. Co(2+) is required as a cofactor. The cofactor is Zn(2+).

It is found in the cytoplasm. It carries out the reaction 7-phospho-2-dehydro-3-deoxy-D-arabino-heptonate = 3-dehydroquinate + phosphate. It functions in the pathway metabolic intermediate biosynthesis; chorismate biosynthesis; chorismate from D-erythrose 4-phosphate and phosphoenolpyruvate: step 2/7. Functionally, catalyzes the conversion of 3-deoxy-D-arabino-heptulosonate 7-phosphate (DAHP) to dehydroquinate (DHQ). This Corynebacterium pseudotuberculosis (strain C231) protein is 3-dehydroquinate synthase.